The primary structure comprises 922 residues: Metabotropic glutamate receptor 7 (922 aa).

A signal peptide spans 1-34; sequence MVQLRKLLRVLTLMKFPCCVLEVLLCALAAAARG. At 35–590 the chain is on the extracellular side; sequence QEMYAPHSIR…IIKLEWHSPW (556 aa). Cysteines 67 and 109 form a disulfide. An N-linked (GlcNAc...) asparagine glycan is attached at N98. Residues S159, 180–182, Y230, and D314 contribute to the L-glutamate site; that span reads AST. Intrachain disulfides connect C249–C541, C374–C390, C430–C437, C523–C542, C527–C545, C548–C560, and C563–C576. Residue K407 participates in L-glutamate binding. N458 and N486 each carry an N-linked (GlcNAc...) asparagine glycan. An N-linked (GlcNAc...) asparagine glycan is attached at N572. Residues 591–615 form a helical membrane-spanning segment; the sequence is AVIPVFLAMLGIIATIFVMATFIRY. Topologically, residues 616-627 are cytoplasmic; it reads NDTPIVRASGRE. Residues 628 to 648 form a helical membrane-spanning segment; sequence LSYVLLTGIFLCYIITFLMIA. Topologically, residues 649-654 are extracellular; it reads KPDVAV. Residues 655 to 675 form a helical membrane-spanning segment; that stretch reads CSFRRVFLGLGMCISYAALLT. Topologically, residues 676-702 are cytoplasmic; that stretch reads KTNRIYRIFEQGKKSVTAPRLISPTSQ. The chain crosses the membrane as a helical span at residues 703 to 723; it reads LAITSSLISVQLLGVFIWFGV. The Extracellular segment spans residues 724–753; sequence DPPNIIIDYDEHKTMNPEQARGVLKCDITD. A helical membrane pass occupies residues 754–775; sequence LQIICSLGYSILLMVTCTVYAI. Topologically, residues 776-788 are cytoplasmic; the sequence is KTRGVPENFNEAK. Residues 789–810 traverse the membrane as a helical segment; that stretch reads PIGFTMYTTCIVWLAFIPIFFG. Topologically, residues 811–825 are extracellular; sequence TAQSAEKLYIQTTTL. The helical transmembrane segment at 826–850 threads the bilayer; it reads TISMNLSASVALGMLYMPKVYIIIF. Residues 851-922 lie on the Cytoplasmic side of the membrane; it reads HPELNVQKRK…VTWYTIPPTV (72 aa).

This sequence belongs to the G-protein coupled receptor 3 family. In terms of assembly, homodimer. Interacts with PICK1.

Its subcellular location is the cell membrane. Its function is as follows. G-protein coupled receptor activated by glutamate that regulates axon outgrowth through the MAPK-cAMP-PKA signaling pathway during neuronal development. Ligand binding causes a conformation change that triggers signaling via guanine nucleotide-binding proteins (G proteins) and modulates the activity of downstream effectors, such as adenylate cyclase that it inhibits. This is Metabotropic glutamate receptor 7 (GRM7) from Pongo abelii (Sumatran orangutan).